The sequence spans 948 residues: Probable disease resistance protein At5g47260 (948 aa).

A coiled-coil region spans residues 20–57 (RKYLYNLERNLEALHKVMQDLNAMRNDLLKRLSKEEEI). One can recognise an NB-ARC domain in the interval 134–432 (HRALPPLVIK…CEGILAKEDR (299 aa)). Position 176 to 183 (176 to 183 (GRGGVGKT)) interacts with ATP. LRR repeat units lie at residues 498 to 519 (MIRR…PQCS), 520 to 542 (ELTT…FFQW), 545 to 567 (GLVV…VSSL), 569 to 591 (LLRF…KELK), 592 to 614 (SLIH…ASLL), 615 to 636 (NLQV…EDIQ), 640 to 661 (SLKE…LSIQ), 666 to 686 (SIRR…LSLN), and 690 to 711 (SLCE…WRCT).

This sequence belongs to the disease resistance NB-LRR family.

Potential disease resistance protein. The protein is Probable disease resistance protein At5g47260 of Arabidopsis thaliana (Mouse-ear cress).